The primary structure comprises 354 residues: Kelch domain-containing protein 8B (354 aa).

8 Kelch repeats span residues 1 to 31 (MSAGGGRAFAWQVFPPMPTCRVYGTVAHQDE), 32 to 79 (HLLV…VLGK), 81 to 127 (VLVV…ERDG), 128 to 175 (MVYA…LHGN), 176 to 222 (KIYV…MAEG), 224 to 281 (VFSL…SLGG), 282 to 329 (HIVA…QAGP), and 331 to 354 (LFVIGGVAQGPSQAVEALCLRDGV).

The protein resides in the cytoplasm. It is found in the midbody. Functionally, involved in pinching off the separated nuclei at the cleavage furrow and in cytokinesis. Required for mitotic integrity and maintenance of chromosomal stability. Protects cells against mitotic errors, centrosomal amplification, micronucleus formation and aneuploidy. Plays a key role of midbody function involving abscission of the daughter cells during cytokinesis and appropriate chromosomal and nuclear segregation into the daughter cells. This chain is Kelch domain-containing protein 8B (KLHDC8B), found in Pongo abelii (Sumatran orangutan).